Consider the following 976-residue polypeptide: Chitin synthase 3A (976 aa).

The tract at residues 29–72 (DDANASNRSPVSNPYEPDYDQLSPPPMLGAQRPVPEQNESSRDL) is disordered. Residues 31–40 (ANASNRSPVS) show a composition bias toward polar residues. N32, N66, N95, and N602 each carry an N-linked (GlcNAc...) asparagine glycan. 7 helical membrane passes run 639 to 659 (LLNV…TTII), 684 to 704 (IVNV…FVLA), 717 to 737 (VLSF…TGYL), 773 to 793 (LIII…FLYL), 801 to 821 (SFPQ…VYAF), 903 to 923 (TGLV…VTTD), and 944 to 964 (FLLY…LWFI).

Belongs to the chitin synthase family. Class III subfamily.

Its subcellular location is the cell membrane. It catalyses the reaction [(1-&gt;4)-N-acetyl-beta-D-glucosaminyl](n) + UDP-N-acetyl-alpha-D-glucosamine = [(1-&gt;4)-N-acetyl-beta-D-glucosaminyl](n+1) + UDP + H(+). Polymerizes chitin, a structural polymer of the cell wall and septum, by transferring the sugar moiety of UDP-GlcNAc to the non-reducing end of the growing chitin polymer. Shows additive effects in septum formation with CHS1, CHS2, CHS4, CHS5, CHS6 and CHS7. Involved in virulence and mediates mycotoxin deoxinivalenol (DON) biosynthesis via the regulation of the expression of TRI4, TRI5 and TRI6. This is Chitin synthase 3A from Gibberella zeae (strain ATCC MYA-4620 / CBS 123657 / FGSC 9075 / NRRL 31084 / PH-1) (Wheat head blight fungus).